The chain runs to 413 residues: Cell division protein FtsZ 2 (413 aa).

GTP contacts are provided by residues 130 to 132 (GTG), glutamate 169, arginine 173, and aspartate 216.

The protein belongs to the FtsZ family. As to quaternary structure, homodimer. Polymerizes to form a dynamic ring structure in a strictly GTP-dependent manner. Interacts directly with several other division proteins.

It is found in the cytoplasm. In terms of biological role, essential cell division protein that forms a contractile ring structure (Z ring) at the future cell division site. The regulation of the ring assembly controls the timing and the location of cell division. One of the functions of the FtsZ ring is to recruit other cell division proteins to the septum to produce a new cell wall between the dividing cells. Binds GTP and shows GTPase activity. In Pyrococcus abyssi (strain GE5 / Orsay), this protein is Cell division protein FtsZ 2.